Here is a 556-residue protein sequence, read N- to C-terminus: Arginine--tRNA ligase (556 aa).

Positions Ala-132–Gly-142 match the 'HIGH' region motif.

It belongs to the class-I aminoacyl-tRNA synthetase family. As to quaternary structure, monomer.

It localises to the cytoplasm. It catalyses the reaction tRNA(Arg) + L-arginine + ATP = L-arginyl-tRNA(Arg) + AMP + diphosphate. This chain is Arginine--tRNA ligase, found in Kocuria rhizophila (strain ATCC 9341 / DSM 348 / NBRC 103217 / DC2201).